Here is a 512-residue protein sequence, read N- to C-terminus: Ankyrin repeat domain-containing protein SOWAHC (512 aa).

A phosphoserine mark is found at S82 and S125. The disordered stretch occupies residues 126-248; the sequence is LGLGGEVSDQ…AEEESSVGAS (123 aa). Residues 173–186 show a composition bias toward low complexity; sequence PPQGEAEGGSSPSG. S205 carries the post-translational modification Phosphoserine. Gly residues predominate over residues 214–228; it reads PGDGNAGGRSRGGGD. The segment covering 229 to 248 has biased composition (low complexity); that stretch reads SDTASLASSSAEEESSVGAS. 2 ANK repeats span residues 288 to 317 and 327 to 357; these read TGFT…KHQL and GGYT…DVDI. R395 carries the post-translational modification Omega-N-methylarginine. The interval 427-500 is disordered; that stretch reads HVPEGWTGGS…EERSLRGYSS (74 aa). A compositionally biased stretch (basic residues) spans 453–462; the sequence is MKPRLNKIRF. The segment covering 481 to 492 has biased composition (acidic residues); the sequence is EEGEEEEEEEEE.

The protein belongs to the SOWAH family.

The polypeptide is Ankyrin repeat domain-containing protein SOWAHC (Sowahc) (Mus musculus (Mouse)).